Consider the following 358-residue polypeptide: tRNA-specific 2-thiouridylase MnmA (358 aa).

ATP-binding positions include 6–13 (ALSGGVDS) and Met-32. The Nucleophile role is filled by Cys-103. A disulfide bridge connects residues Cys-103 and Cys-201. Residue Gly-127 coordinates ATP. Positions 151–153 (KDQ) are interaction with tRNA. Cys-201 (cysteine persulfide intermediate) is an active-site residue.

Belongs to the MnmA/TRMU family.

It is found in the cytoplasm. It carries out the reaction S-sulfanyl-L-cysteinyl-[protein] + uridine(34) in tRNA + AH2 + ATP = 2-thiouridine(34) in tRNA + L-cysteinyl-[protein] + A + AMP + diphosphate + H(+). Catalyzes the 2-thiolation of uridine at the wobble position (U34) of tRNA, leading to the formation of s(2)U34. This Thermotoga sp. (strain RQ2) protein is tRNA-specific 2-thiouridylase MnmA.